A 241-amino-acid chain; its full sequence is Biosynthetic peptidoglycan transglycosylase (241 aa).

The chain crosses the membrane as a helical span at residues 18-38 (GVIGIIALWMAGILIFAFLPV).

The protein belongs to the glycosyltransferase 51 family.

The protein localises to the cell inner membrane. The catalysed reaction is [GlcNAc-(1-&gt;4)-Mur2Ac(oyl-L-Ala-gamma-D-Glu-L-Lys-D-Ala-D-Ala)](n)-di-trans,octa-cis-undecaprenyl diphosphate + beta-D-GlcNAc-(1-&gt;4)-Mur2Ac(oyl-L-Ala-gamma-D-Glu-L-Lys-D-Ala-D-Ala)-di-trans,octa-cis-undecaprenyl diphosphate = [GlcNAc-(1-&gt;4)-Mur2Ac(oyl-L-Ala-gamma-D-Glu-L-Lys-D-Ala-D-Ala)](n+1)-di-trans,octa-cis-undecaprenyl diphosphate + di-trans,octa-cis-undecaprenyl diphosphate + H(+). The protein operates within cell wall biogenesis; peptidoglycan biosynthesis. Its function is as follows. Peptidoglycan polymerase that catalyzes glycan chain elongation from lipid-linked precursors. The sequence is that of Biosynthetic peptidoglycan transglycosylase from Yersinia pseudotuberculosis serotype IB (strain PB1/+).